A 377-amino-acid polypeptide reads, in one-letter code: Nitric oxide reductase FlRd-NAD(+) reductase (377 aa).

The protein belongs to the FAD-dependent oxidoreductase family. FAD is required as a cofactor.

The protein resides in the cytoplasm. The catalysed reaction is 2 reduced [nitric oxide reductase rubredoxin domain] + NAD(+) + H(+) = 2 oxidized [nitric oxide reductase rubredoxin domain] + NADH. The protein operates within nitrogen metabolism; nitric oxide reduction. In terms of biological role, one of at least two accessory proteins for anaerobic nitric oxide (NO) reductase. Reduces the rubredoxin moiety of NO reductase. In Salmonella paratyphi C (strain RKS4594), this protein is Nitric oxide reductase FlRd-NAD(+) reductase.